The sequence spans 1082 residues: Transcription elongation factor SPT5 (1082 aa).

A compositionally biased stretch (acidic residues) spans 1–28 (MSDSEDSNFSEEEDSERSSEAEEAEVEE). The disordered stretch occupies residues 1 to 88 (MSDSEDSNFS…DVDDEYEDED (88 aa)). Residues Ser-32 and Ser-36 each carry the phosphoserine modification. Acidic residues-rich tracts occupy residues 38–62 (KEEE…EDDD) and 76–88 (DEAD…EDED). Lys-141 is covalently cross-linked (Glycyl lysine isopeptide (Lys-Gly) (interchain with G-Cter in SUMO2)). Positions 174 to 268 (DPNLWTVKCK…TDVLKVVKEV (95 aa)) are interaction with SUPT4H1 and SUPT4H2. The KOW 1 domain occupies 271 to 304 (LKPKSWVRLKRGIYKDDIAQVDYVEPSQNTISLK). Residues 311–418 (YDRIKARMSL…STGKEREHNF (108 aa)) are interaction with RNA polymerase II. Residues 326 to 332 (KRKKFKR) carry the UBR5-degron motif. 2 consecutive KOW domains span residues 418 to 449 (FQPG…ITIM) and 470 to 501 (FKMG…VILF). Lys-577 lines the RNA pocket. One can recognise a KOW 4 domain in the interval 592-625 (IHVKDIVKVIDGPHSGREGEIRHLYRSFAFLHCK). Arg-617 contacts DNA. Thr-661 bears the Phosphothreonine mark. Residues Ser-664 and Ser-684 each carry the phosphoserine modification. The segment at 669 to 694 (SPMHPSAEGQHGGFGSPGGMSRGRGR) is disordered. Residues 678–690 (QHGGFGSPGGMSR) show a composition bias toward gly residues. Asymmetric dimethylarginine; alternate is present on residues Arg-690 and Arg-692. An omega-N-methylarginine; alternate mark is found at Arg-690 and Arg-692. A Symmetric dimethylarginine; alternate modification is found at Arg-692. A KOW 5 domain is found at 698–731 (ELIGQTVRISQGPYKGYIGVVKDATESTARVELH). Lys-712 is subject to N6-acetyllysine. Residues 741-801 (RQRLTTVDSQ…RTPHYGSQTP (61 aa)) show a composition bias toward polar residues. The interval 741–972 (RQRLTTVDSQ…GSGIEQNSSD (232 aa)) is disordered. Residues 748 to 753 (DSQRPG) form a CTR1-1; approximate repeat. The interval 748–811 (DSQRPGGMTS…LHDGSRTPAQ (64 aa)) is 9 X 7 AA approximate tandem repeats of G-S-[QR]-T-P-X-[YQ], motif CTR1. One copy of the CTR1-2 repeat lies at 754–759 (GMTSTY). The CTR1-3 repeat unit spans residues 760 to 765 (GRTPMY). A CTR1-4 repeat occupies 766–772 (GSQTPMY). 2 positions are modified to phosphothreonine; by CDK9: Thr-769 and Thr-778. The stretch at 775 to 781 (GSRTPMY) is one CTR1-5 repeat. The CTR1-6 repeat unit spans residues 782-788 (GSQTPLQ). At Ser-783 the chain carries Phosphoserine. Residues Thr-785 and Thr-793 each carry the phosphothreonine modification. The CTR1-7 repeat unit spans residues 790-796 (GSRTPHY). The stretch at 797-803 (GSQTPLH) is one CTR1-8 repeat. A Phosphoserine modification is found at Ser-798. Thr-800 and Thr-808 each carry phosphothreonine. Residues 805-811 (GSRTPAQ) form a CTR1-9 repeat. A compositionally biased stretch (acidic residues) spans 828-838 (EEYEYAFDDEP). The CTR2-1 repeat unit spans residues 838–845 (PTPSPQAY). The segment at 838-944 (PTPSPQAYGG…ASPSPSPVGY (107 aa)) is 10 X 8 AA approximate tandem repeats of P-[TS]-P-S-P-[QA]-[SG]-Y, motif CTR2. Residues 848 to 856 (TPNPQTPGY) form a CTR2-2; approximate repeat. Positions 851–860 (PQTPGYPDPS) are enriched in pro residues. A CTR2-3; approximate repeat occupies 857–863 (PDPSSPQ). The span at 861-884 (SPQVNPQYNPQTPGTPAMYNTDQF) shows a compositional bias: polar residues. One copy of the CTR2-4; half-length repeat lies at 875-879 (TPAMY). Residues 890–896 (PSPQGSY) form a CTR2-5; approximate repeat. The segment covering 890 to 905 (PSPQGSYQPSPSPQSY) has biased composition (low complexity). Residues 898–905 (PSPSPQSY) form a CTR2-6 repeat. The stretch at 910 to 915 (PSPAGY) is one CTR2-7; approximate repeat. Residues 918-924 (THSPASY) form a CTR2-8 repeat. A CTR2-9 repeat occupies 926–933 (PTPSPMAY). One copy of the CTR2-10 repeat lies at 937-944 (PSPSPVGY). Residue Thr-1028 is modified to Phosphothreonine. Lys-1031 is covalently cross-linked (Glycyl lysine isopeptide (Lys-Gly) (interchain with G-Cter in SUMO2)).

Belongs to the SPT5 family. Interacts with SUPT4H1 to form DSIF. DSIF interacts with the positive transcription elongation factor b complex (P-TEFb complex), which is composed of CDK9 and cyclin-T (CCNT1 or CCNT2). DSIF interacts with RNA polymerase II, and this interaction is reduced by phosphorylation of the C-terminal domain (CTD) of POLR2A by P-TEFb. DSIF also interacts with the NELF complex, which is composed of NELFA, NELFB, NELFD and NELFE, and this interaction occurs following prior binding of DSIF to RNA polymerase II. Also interacts with PRMT1/HRMT1L2, HTATSF1/TATSF1, RNGTT/CAP1A, PRMT5/SKB1, SUPT6H, and can interact with PIN1. Component of a complex which is at least composed of HTATSF1/Tat-SF1, the P-TEFb complex components CDK9 and CCNT1, RNA polymerase II, SUPT5H, and NCL/nucleolin. Interacts with MCM3AP. In terms of processing, methylated by PRMT1/HRMT1L2 and PRMT5/SKB1. Methylation negatively regulates interaction with P-TEFb and RNA polymerase II. Post-translationally, phosphorylated by CDK7 and CDK9. Phosphorylation by P-TEFb (CDK9) at Thr residues of the C-terminal repeats alleviates transcriptional pausing and promotes transcription elongation. Dephosphorylated by the INTAC complex when transcripts are unfavorably configured for transcriptional elongation, leading to premature transcription termination: dephosphorylation is mediated by the PPP2CA component of the INTAC complex. Dephosphorylated by the PNUTS-PP1 complex in termination zones downstream of poly(A) sites, thereby promoting deceleration of RNA polymerase II transcription. Dephosphorylated by the PNUTS-PP1 complex in termination zones downstream of poly(A) sites, thereby promoting deceleration of RNA polymerase II transcription. Phosphorylation may also stimulate interaction with PIN1. Bulk phosphorylation occurs predominantly in mitosis. Ubiquitinated by UBR5 when not assembled in the DSIF complex, leading to its degradation: UBR5 recognizes and binds a degron that is not accessible when SUPT5H is part of the DSIF complex.

The protein resides in the nucleus. Functionally, component of the DRB sensitivity-inducing factor complex (DSIF complex), which regulates mRNA processing and transcription elongation by RNA polymerase II. DSIF positively regulates mRNA capping by stimulating the mRNA guanylyltransferase activity of RNGTT/CAP1A. DSIF also acts cooperatively with the negative elongation factor complex (NELF complex) to enhance transcriptional pausing at sites proximal to the promoter. Transcriptional pausing may facilitate the assembly of an elongation competent RNA polymerase II complex. DSIF and NELF promote pausing by inhibition of the transcription elongation factor TFIIS/S-II. TFIIS/S-II binds to RNA polymerase II at transcription pause sites and stimulates the weak intrinsic nuclease activity of the enzyme. Cleavage of blocked transcripts by RNA polymerase II promotes the resumption of transcription from the new 3' terminus and may allow repeated attempts at transcription through natural pause sites. Following phosphorylation by CDK9, DSIF can also positively regulate transcriptional elongation. This chain is Transcription elongation factor SPT5 (Supt5h), found in Mus musculus (Mouse).